Here is a 1073-residue protein sequence, read N- to C-terminus: MTSTSAVDGGLGSETAWLEDLLREVQLEQFLDRIRDDLQVTRLAHFDYVLPDDLERCGLGKPAIRRLMEAVRKKKAHQWRKNILSKLIGGGKQPSSKKQSSAARESSQGNGTQLTCLIHEKDITMGLKLGDGSFGVVRRGEWSASPAGKVIPVAVKVLKSDNLTQPGIIDDFFREVQAMHALDHANLVRLYGVVLSQPMMMITELAERGSLLDTLRKQCRHTSLTIIWNWSVQIVTGMAYLEQKRFLHRDLACRNVLLAAGNKIKIGDFGLMRALPQEDDCYVMSEHKKVPFPWCAPESLRFRQFSHASDTWMFGVTLWEMFSFGEDPWVGLNGSQILRKIDREGERLHQPDACPPDVYAMMLQCWDKTPAERPTFAALKEYLASMSPPVMRASRSHHESKGLQIEPGDTIAIIDGRHELKLIKGQNQRTFDIGIFPRNLLEQRKVGAAGDVVMRSSVGNGSSSSPFGFCWGGAAAMANGDDRQRKCASMTNQPHAKERKSTSSKQFAYNKLVNDSATGLQRRNAVKHKGVVVGPQRPPPPQFQQEGILIDISPDMRPIAEAGTGGAKGAGDSSSLQADSSFCILDAPIDVPTYAGSSGSGDLNVSPTYYNEQPQFDFDPAKMTASPGRLQPPPYQMPPTYSNTMEFVQKRDLHQQQLATPVRERDPFDTTNVETTVALYSNFNQSLEAASPPAPIYNSPSVRKSLFGGSKSNKENIPALESAAMQLNLSNLTLERHDATCIQPVEPVPAPPGDGVLLDKSFIAELEKDMYSNGQNRAQEEYQRNSTQMYASKDMVYKQNLTPLKNGAAPGSVHSNHSSPSSTASPKQNNVEAAAAAAATTQSVVNRIWYEQVASTQSEYYAQPPTEQAEEQIYQNHRHQQQQQQELNHSFVAISNRVVAPKNNAYSSTASLYDAVAASTAGSTYYGQVPNGSGAVLYDEVTQDDYLRPTRPAPLAPPPLSAQQIQRRMEKMRLQQQQQLDGAHQLYAPVPSDYGREQEKLQQLMQELGSSAVEQDVRNALRAASGDVGLATRHYKIDQLARLGVAGRPQCEQALQQTNWSLEVAAELLLNAG.

The segment at 88-110 (IGGGKQPSSKKQSSAARESSQGN) is disordered. Residues 123 to 383 (ITMGLKLGDG…PTFAALKEYL (261 aa)) form the Protein kinase domain. ATP contacts are provided by residues 129-137 (LGDGSFGVV) and Lys156. Asp250 functions as the Proton acceptor in the catalytic mechanism. Positions 386–446 (MSPPVMRASR…PRNLLEQRKV (61 aa)) constitute an SH3 domain. Disordered stretches follow at residues 484-506 (QRKC…SSKQ), 803-834 (PLKN…VEAA), and 862-882 (AQPP…HQQQ). The segment covering 812–826 (SVHSNHSSPSSTASP) has biased composition (low complexity). A UBA domain is found at 1029 to 1072 (GLATRHYKIDQLARLGVAGRPQCEQALQQTNWSLEVAAELLLNA).

Belongs to the protein kinase superfamily. Tyr protein kinase family. Interacts with yki and ex. Interacts with drk. Likely to be a member of an axonal guidance receptor complex that includes SH3PX1, dock and Dscam. Interacts (via N-terminus) with dock. Interacts with SH3PX1 (via SH3 domain). Mg(2+) is required as a cofactor. Phosphorylated. Autophosphorylated. As to expression, detected in ovaries (at protein level). In adults, relatively higher expression in the head compared to the body.

The protein localises to the cytoplasm. Its subcellular location is the cytoplasmic vesicle. It localises to the clathrin-coated vesicle. The enzyme catalyses L-tyrosyl-[protein] + ATP = O-phospho-L-tyrosyl-[protein] + ADP + H(+). The catalysed reaction is L-threonyl-[protein] + ATP = O-phospho-L-threonyl-[protein] + ADP + H(+). Non-receptor tyrosine-protein and serine/threonine-protein kinase that is implicated in diverse biological functions such as cell survival, cell differentiation, cell growth and proliferation. Phosphorylates SH3PX1 and ex. Phosphorylates SH3PX1 predominantly on 'Tyr-56', which likely promotes the recruitment of SH3PX1 to an axonal guidance receptor complex that includes dock and Dscam; because phosphorylation of SH3PX1 increases its interaction with the complex member dock while decreasing its interaction with the actin cytoskeleton modulator WASp. In the wing and eye, promotes tissue growth, and during embryogenesis coordinates cell shape changes required for correct dorsal closure. Functions in the negative regulation of the Hippo/SWH (Sav/Wts/Hpo) signaling pathway by enhancing yki activity thereby promoting cell proliferation and inhibiting apoptosis. This is accomplished, at least in part, by phosphorylating ex thereby reducing its ability to efficiently activate the Hippo signaling cascade. In the eye disk, wing disk and possibly spermatids, inhibits programmed cell death induced by hid and rpr through a mechanism that is independent of the MAP kinase signal transduction pathway. Essential for male and female fertility. During oogenesis required for the correct temporal assembly, and consequently the catalytic activity of long Ctps filaments (cytoophidium) in the germline nurse cells, likely by phosphorylating an unidentified substrate that is essential for linking individual Ctps filaments into large, catalytically active assemblies. The sequence is that of Activated Cdc42 kinase Ack from Drosophila melanogaster (Fruit fly).